A 707-amino-acid polypeptide reads, in one-letter code: Tryptophan synthase (707 aa).

Positions 1 to 297 (MSEQLRQTFA…VKKEILDEFD (297 aa)) are tryptophan synthase alpha chain. Residues Glu50 and Asp61 each act as proton acceptor in the active site. Residues 298–707 (ENHKHPIRFG…DLRFEEDPSA (410 aa)) form a tryptophan synthase beta chain region. Lys384 bears the N6-(pyridoxal phosphate)lysine mark. Ser540 and Ser683 each carry phosphoserine.

The protein in the N-terminal section; belongs to the TrpA family. It in the C-terminal section; belongs to the TrpB family. Pyridoxal 5'-phosphate serves as cofactor.

The catalysed reaction is (1S,2R)-1-C-(indol-3-yl)glycerol 3-phosphate + L-serine = D-glyceraldehyde 3-phosphate + L-tryptophan + H2O. Its pathway is amino-acid biosynthesis; L-tryptophan biosynthesis; L-tryptophan from chorismate: step 5/5. The protein is Tryptophan synthase (TRP5) of Saccharomyces cerevisiae (strain ATCC 204508 / S288c) (Baker's yeast).